The sequence spans 1482 residues: Cystic fibrosis transmembrane conductance regulator (1482 aa).

Over 1-77 the chain is Cytoplasmic; the sequence is MQRSPLEKAS…KLINALRRCF (77 aa). The chain crosses the membrane as a helical span at residues 78–98; that stretch reads FWRFMFYGILLYLGEVTKAVQ. In terms of domain architecture, ABC transmembrane type-1 1 spans 81 to 365; the sequence is FMFYGILLYL…WAVQTWYDSL (285 aa). The Extracellular portion of the chain corresponds to 99–122; the sequence is PLLLGRIIASYDPDNKVERSIAIY. A helical membrane pass occupies residues 123 to 146; it reads LGIGLCLLFIVRTLLLHPAIFGLH. The Cytoplasmic portion of the chain corresponds to 147–195; it reads HIGMQMRIAMFSLIYKKILKLSSRVLDKISIGQLVSLLSNNLNKFDEGL. The helical transmembrane segment at 196-216 threads the bilayer; sequence ALAHFVWIAPLQVTLLMGLLW. The Extracellular segment spans residues 217-222; that stretch reads ELLQAS. Residues 223–243 form a helical membrane-spanning segment; the sequence is AFCGLGFLIVLALVQAGLGRM. Residues 244–298 are Cytoplasmic-facing; the sequence is MMKYRDQRAGKINERLVITSEMIENIQSVKAYCWEEAMEKMIENLRQTELKLTRK. A helical membrane pass occupies residues 299–319; that stretch reads AAYVRYFNSSAFFFSGFFVVF. Topologically, residues 320 to 339 are extracellular; it reads LSVLPYALIKGIILRKIFTT. A helical transmembrane segment spans residues 340 to 358; that stretch reads ISFCIVLRMAVTRQFPWAV. The Cytoplasmic portion of the chain corresponds to 359-859; the sequence is QTWYDSLGAI…YLRYLAVNKS (501 aa). ATP-binding positions include Trp401, 458–465, and Gln493; that span reads GSTGAGKT. Residues 423–646 form the ABC transporter 1 domain; it reads NGDNSLFFSN…RPDFSSKLMG (224 aa). Residue Cys524 is the site of S-palmitoyl cysteine attachment. Ser549 and Ser660 each carry phosphoserine. Residues 654–832 are disordered R region; sequence SAERRNSILT…EEINEEYLKE (179 aa). A Phosphoserine; by PKA modification is found at Ser670. Residue Ser686 is modified to Phosphoserine. A Glycyl lysine isopeptide (Lys-Gly) (interchain with G-Cter in ubiquitin) cross-link involves residue Lys688. Phosphoserine is present on residues Ser700 and Ser712. Thr717 is subject to Phosphothreonine. A phosphoserine mark is found at Ser738, Ser769, Ser791, Ser796, and Ser814. Residues 860–880 traverse the membrane as a helical segment; that stretch reads LSLVLIWCLVIFLAEVAISLA. Positions 860-1156 constitute an ABC transmembrane type-1 2 domain; it reads LSLVLIWCLV…AVNSSIDVDS (297 aa). Over 881–919 the chain is Extracellular; that stretch reads VLLLLDKSPRYSKGNGTASGNGSSAVIITSTSSYYLFYI. N-linked (GlcNAc...) asparagine glycans are attached at residues Asn895 and Asn901. Residues 920 to 940 form a discontinuously helical membrane-spanning segment; it reads YVGVADTLLALGFFRGLPLVH. The Cytoplasmic portion of the chain corresponds to 941-991; that stretch reads TLITVSKILHHRMLHSVLRAPMSTLNMLKAGGILNRFSKDIAILDDLLPLT. A helical membrane pass occupies residues 992–1012; that stretch reads IFDFVQLLLIVIGAVAVVSVL. The Extracellular segment spans residues 1013-1014; it reads QP. Residues 1015-1035 traverse the membrane as a helical segment; sequence YIFLATVPVIAAFVILRGYFL. Over 1036-1096 the chain is Cytoplasmic; sequence HTSQQLKQLE…TANWFLYLST (61 aa). Residues 1097–1117 traverse the membrane as a helical segment; the sequence is LRWFQMRIEMIFVVFFIAVTF. Topologically, residues 1118–1131 are extracellular; that stretch reads ISILTTGEGEGTVG. Residues 1132–1152 traverse the membrane as a helical segment; sequence IILTLAMNIMGTLQWAVNSSI. The Cytoplasmic portion of the chain corresponds to 1153–1482; sequence DVDSLMRSVS…TEEEVQETRL (330 aa). In terms of domain architecture, ABC transporter 2 spans 1212 to 1445; the sequence is MTVKDLTARY…KSLFRQAISP (234 aa). Residues Tyr1221 and 1246-1253 each bind ATP; that span reads GRTGAGKS. The interaction with GORASP2 stretch occupies residues 1388–1482; it reads RTLKQAFADC…TEEEVQETRL (95 aa). Cys1397 is lipidated: S-palmitoyl cysteine. A phosphoserine mark is found at Ser1446 and Ser1458. A disordered region spans residues 1450-1482; sequence KLFPRRNSSKHKSRSPITALKEETEEEVQETRL. Basic residues predominate over residues 1451 to 1463; sequence LFPRRNSSKHKSR. Acidic residues predominate over residues 1472–1482; that stretch reads ETEEEVQETRL. The PDZ-binding motif lies at 1480-1482; the sequence is TRL.

This sequence belongs to the ABC transporter superfamily. ABCC family. CFTR transporter (TC 3.A.1.202) subfamily. As to quaternary structure, monomer; does not require oligomerization for channel activity. May form oligomers in the membrane. Interacts with SLC26A3, SLC26A6 and NHERF1. Interacts with SHANK2. Interacts with MYO6. Interacts (via C-terminus) with GOPC (via PDZ domain); this promotes CFTR internalization and thereby decreases channel activity. Interacts with SLC4A7 through NHERF1. Found in a complex with MYO5B and RAB11A. Interacts with ANO1. Interacts with SLC26A8. Interacts with AHCYL1; the interaction increases CFTR activity. Interacts with CSE1L. The core-glycosylated form interacts with GORASP2 (via PDZ GRASP-type 1 domain) in respone to ER stress. Interacts with MARCHF2; the interaction leads to CFTR ubiqtuitination and degradation. Interacts with ADGRG2. N-glycosylated. Post-translationally, phosphorylated; cAMP treatment promotes phosphorylation and activates the channel. Dephosphorylation decreases the ATPase activity (in vitro). Phosphorylation at PKA sites activates the channel. Phosphorylation at PKC sites enhances the response to phosphorylation by PKA. Phosphorylated by AMPK; this inhibits channel activity. In terms of processing, ubiquitinated, leading to its degradation in the lysosome. Deubiquitination by USP10 in early endosomes enhances its endocytic recycling to the cell membrane. Ubiquitinated by RNF185 during ER stress. Ubiquitinated by MARCHF2.

The protein resides in the apical cell membrane. The protein localises to the early endosome membrane. It is found in the cell membrane. Its subcellular location is the recycling endosome membrane. It localises to the endoplasmic reticulum membrane. The protein resides in the nucleus. The enzyme catalyses ATP + H2O + closed Cl(-) channel = ADP + phosphate + open Cl(-) channel.. It carries out the reaction chloride(in) = chloride(out). The catalysed reaction is hydrogencarbonate(in) = hydrogencarbonate(out). It catalyses the reaction ATP + H2O = ADP + phosphate + H(+). Functionally, epithelial ion channel that plays an important role in the regulation of epithelial ion and water transport and fluid homeostasis. Mediates the transport of chloride ions across the cell membrane. Possesses an intrinsic ATPase activity and utilizes ATP to gate its channel; the passive flow of anions through the channel is gated by cycles of ATP binding and hydrolysis by the ATP-binding domains. The ion channel is also permeable to HCO(3)(-); selectivity depends on the extracellular chloride concentration. Exerts its function also by modulating the activity of other ion channels and transporters. Contributes to the regulation of the pH and the ion content of the epithelial fluid layer. Modulates the activity of the epithelial sodium channel (ENaC) complex, in part by regulating the cell surface expression of the ENaC complex. May regulate bicarbonate secretion and salvage in epithelial cells by regulating the transporter SLC4A7. Can inhibit the chloride channel activity of ANO1. Plays a role in the chloride and bicarbonate homeostasis during sperm epididymal maturation and capacitation. This chain is Cystic fibrosis transmembrane conductance regulator, found in Otolemur garnettii (Small-eared galago).